A 229-amino-acid polypeptide reads, in one-letter code: Putative 3-methyladenine DNA glycosylase (229 aa).

It belongs to the DNA glycosylase MPG family.

The polypeptide is Putative 3-methyladenine DNA glycosylase (Enterococcus faecalis (strain ATCC 700802 / V583)).